The sequence spans 89 residues: N.vectensis toxin 7 (89 aa).

The signal sequence occupies residues 1 to 21 (MASFFKIAVICLVMLVVCSNA). Disulfide bonds link Cys44–Cys77, Cys46–Cys69, and Cys62–Cys78.

In terms of tissue distribution, expressed in ectodermal gland cells.

Probable toxin. The protein is N.vectensis toxin 7 of Nematostella vectensis (Starlet sea anemone).